The following is a 338-amino-acid chain: Secretion system apparatus protein SsaL (338 aa).

The protein is Secretion system apparatus protein SsaL (ssaL) of Salmonella typhimurium (strain LT2 / SGSC1412 / ATCC 700720).